The chain runs to 522 residues: MSALSESPAIPSFWRPETSEISKKPRPNTTVGFQFDNRNVGTSAPSTPAIRRNNTDSFERGLSLPLPSSKQDTGSSVLDPDGDAYVNRYARPVTAGSIYIPSNYHKSFSPNTFSGFNVKRSASKSPKRSANGSTSEDISIEGSPSETAKGARSSFNSNFRTFDIGSERRRRILEASQDSSRPGRYSYRTKSASPALIDTSTLDSRLNFTMGRLERSIAQLSKNTMRAVSHLENPPKDITLPKLNVKNSAWPLQPYSPPANETPASSSSSAKARPVSVPDMSSPVPASSVEYESLKAAVTYSPSQNPKKVAETDSESRKSSFQSSYNDADRPFQVGAQTQSTPNRISRSDSPIVYDVDTHSEDNASTASSEAISQSMRSFQPQPNTGSPFPRFTSTNTEDEQESDIPQSDANDSTVNLNQPNYANLTPTPQVSPKRPTYSRSSPLPSASVPALGDGSPDPPAAPSIQNSLSVHESEMPPHVTRDYTQPAASATPVPKEKPSEKSEKPPKKKGSKLEKFCCILM.

Disordered regions lie at residues 1–83 (MSAL…PDGD), 119–158 (KRSA…FNSN), 170–192 (RRIL…TKSA), 251–285 (PLQP…SPVP), and 300–516 (YSPS…KLEK). 3 stretches are compositionally biased toward polar residues: residues 27-46 (PNTT…SAPS), 66-76 (LPSSKQDTGSS), and 131-146 (NGST…SPSE). Serine 43 carries the post-translational modification Phosphoserine. The span at 258–285 (PANETPASSSSSAKARPVSVPDMSSPVP) shows a compositional bias: low complexity. Serine 303 is subject to Phosphoserine. Positions 308–318 (KVAETDSESRK) are enriched in basic and acidic residues. The span at 335 to 349 (GAQTQSTPNRISRSD) shows a compositional bias: polar residues. Serine 350 bears the Phosphoserine mark. Composition is skewed to polar residues over residues 363-396 (NAST…TSTN) and 404-431 (DIPQ…TPQV). Over residues 439–452 (SRSSPLPSASVPAL) the composition is skewed to low complexity. 2 stretches are compositionally biased toward basic and acidic residues: residues 472–482 (HESEMPPHVTR) and 495–516 (PKEK…KLEK).

In terms of assembly, interacts with tea1 and tea3.

It is found in the cell membrane. Functionally, with tea1, acts in a positive-feedback loop in the microtubule-mediated regulation of cell polarity. Involved in the anchoring of tea1 at the cortex as well as the correct localization of tea3. The protein is Cell polarity protein mod5 (mod5) of Schizosaccharomyces pombe (strain 972 / ATCC 24843) (Fission yeast).